Reading from the N-terminus, the 495-residue chain is Probable cytochrome P450 4s3 (495 aa).

Glutamate 307 and cysteine 436 together coordinate heme.

This sequence belongs to the cytochrome P450 family. The cofactor is heme.

It is found in the endoplasmic reticulum membrane. The protein resides in the microsome membrane. Functionally, may be involved in the metabolism of insect hormones and in the breakdown of synthetic insecticides. This Drosophila melanogaster (Fruit fly) protein is Probable cytochrome P450 4s3 (Cyp4s3).